Consider the following 288-residue polypeptide: MEKYHGLEKIGEGTYGVVYKAQNSDGESFALKKIRLEKEDEGIPSTAIREISILKELRHSNIVKLYDVIHAKKRLILVFEHLDQDLKKLIDVCDGGLESVTAKSFLLQLLNGIAYCHEHRVLHRDLKPQNLLINREGELKIADFGLARAFGIPARRYTHEVVTLWYRAPDILMGSKKYSTPIDIWSVGCIFAEMVNGRPLFPGASETDQLMRIFKILGTPNSQNWPDVFKLPKYDPNFPVYNPLPWETFIKGLDDTGIDLLSKMLKLDPNQRITAKQAIEHPYFKETN.

The Protein kinase domain maps to 4-284 (YHGLEKIGEG…AKQAIEHPYF (281 aa)). ATP is bound by residues 10–18 (IGEGTYGVV) and Lys32. Thr14 carries the phosphothreonine modification. At Tyr15 the chain carries Phosphotyrosine. The Proton acceptor role is filled by Asp125. At Thr158 the chain carries Phosphothreonine.

It belongs to the protein kinase superfamily. CMGC Ser/Thr protein kinase family. CDC2/CDKX subfamily. May form a complex composed of at least the catalytic subunit CRK2 and a cyclin. Requires Mg(2+) as cofactor.

It is found in the cytoplasm. It catalyses the reaction L-seryl-[protein] + ATP = O-phospho-L-seryl-[protein] + ADP + H(+). The catalysed reaction is L-threonyl-[protein] + ATP = O-phospho-L-threonyl-[protein] + ADP + H(+). The enzyme catalyses [DNA-directed RNA polymerase] + ATP = phospho-[DNA-directed RNA polymerase] + ADP + H(+). Its activity is regulated as follows. Phosphorylation at Thr-14 or Tyr-15 inactivates the enzyme, while phosphorylation at Thr-158 activates it. Functionally, serine/threonine-protein kinase. Involved in the control of the cell cycle. Required for entry into S-phase and mitosis. Probable component of the kinase complex that phosphorylates the repetitive C-terminus of RNA polymerase II. In Plasmodium berghei (strain Anka), this protein is Cyclin-dependent kinase 2 homolog.